Consider the following 147-residue polypeptide: 3-hydroxyacyl-[acyl-carrier-protein] dehydratase FabZ (147 aa).

The active site involves His49.

This sequence belongs to the thioester dehydratase family. FabZ subfamily.

Its subcellular location is the cytoplasm. The enzyme catalyses a (3R)-hydroxyacyl-[ACP] = a (2E)-enoyl-[ACP] + H2O. In terms of biological role, involved in unsaturated fatty acids biosynthesis. Catalyzes the dehydration of short chain beta-hydroxyacyl-ACPs and long chain saturated and unsaturated beta-hydroxyacyl-ACPs. In Syntrophotalea carbinolica (strain DSM 2380 / NBRC 103641 / GraBd1) (Pelobacter carbinolicus), this protein is 3-hydroxyacyl-[acyl-carrier-protein] dehydratase FabZ.